A 237-amino-acid polypeptide reads, in one-letter code: Trypsin-1 (237 aa).

The 237-residue stretch at 1–237 folds into the Peptidase S1 domain; sequence IVGGTDAVLG…HVDWIKANAV (237 aa). A disulfide bridge links cysteine 30 with cysteine 46. The active-site Charge relay system is histidine 45. Residues glutamate 64, valine 69, and glutamate 74 each contribute to the Ca(2+) site. Aspartate 96 (charge relay system) is an active-site residue. Disulfide bonds link cysteine 159/cysteine 174 and cysteine 185/cysteine 213. The active-site Charge relay system is serine 189.

This sequence belongs to the peptidase S1 family. The cofactor is Ca(2+).

Its subcellular location is the secreted. It is found in the extracellular space. The enzyme catalyses Preferential cleavage: Arg-|-Xaa, Lys-|-Xaa.. The sequence is that of Trypsin-1 from Astacus astacus (Noble crayfish).